A 181-amino-acid polypeptide reads, in one-letter code: Small ribosomal subunit protein uS4 (181 aa).

The S4 RNA-binding domain occupies 108 to 172 (RRLQTQVYRR…SPLVSDIHSE (65 aa)).

This sequence belongs to the universal ribosomal protein uS4 family. Part of the 30S ribosomal subunit. Contacts protein S5. The interaction surface between S4 and S5 is involved in control of translational fidelity.

In terms of biological role, one of the primary rRNA binding proteins, it binds directly to 16S rRNA where it nucleates assembly of the body of the 30S subunit. Functionally, with S5 and S12 plays an important role in translational accuracy. The polypeptide is Small ribosomal subunit protein uS4 (Methanospirillum hungatei JF-1 (strain ATCC 27890 / DSM 864 / NBRC 100397 / JF-1)).